Reading from the N-terminus, the 388-residue chain is Pregnancy-associated glycoprotein (388 aa).

The N-terminal stretch at 1 to 15 (MKWFGVLGLVTLSEC) is a signal peptide. In terms of domain architecture, Peptidase A1 spans 74–385 (YMGIISVGTP…DRENDRIGLA (312 aa)). Residue Asp-92 is part of the active site. 2 disulfides stabilise this stretch: Cys-105/Cys-110 and Cys-266/Cys-270. Asp-275 is a catalytic residue. Cys-309 and Cys-344 form a disulfide bridge. N-linked (GlcNAc...) asparagine glycosylation is present at Asn-356.

Belongs to the peptidase A1 family. Trophoblast and placental tissue.

It localises to the secreted. Its subcellular location is the extracellular space. This Equus caballus (Horse) protein is Pregnancy-associated glycoprotein (PAG).